Reading from the N-terminus, the 159-residue chain is Ribosomal RNA large subunit methyltransferase H (159 aa).

Residues leucine 76, glycine 108, and 127-132 (FSKMTL) contribute to the S-adenosyl-L-methionine site.

Belongs to the RNA methyltransferase RlmH family. In terms of assembly, homodimer.

The protein resides in the cytoplasm. The catalysed reaction is pseudouridine(1915) in 23S rRNA + S-adenosyl-L-methionine = N(3)-methylpseudouridine(1915) in 23S rRNA + S-adenosyl-L-homocysteine + H(+). Its function is as follows. Specifically methylates the pseudouridine at position 1915 (m3Psi1915) in 23S rRNA. In Bacillus mycoides (strain KBAB4) (Bacillus weihenstephanensis), this protein is Ribosomal RNA large subunit methyltransferase H.